Consider the following 271-residue polypeptide: Thioredoxin-related transmembrane protein 2 homolog (271 aa).

The signal sequence occupies residues 1–28 (MTWKKQMALLAKPYYWVNILLAISYLLA). Residues 29-102 (KKTQFICTRL…AILWAYADFR (74 aa)) lie on the Extracellular side of the membrane. A helical transmembrane segment spans residues 103–123 (YGLGFLLLCVLVGMVLPEPSY). In terms of domain architecture, Thioredoxin spans 112 to 262 (VLVGMVLPEP…YKEAIERLPI (151 aa)). Over 124–271 (RGPEHITYFR…IAPKEAKKVQ (148 aa)) the chain is Cytoplasmic. A Di-lysine motif motif is present at residues 268–271 (KKVQ).

It localises to the membrane. This is Thioredoxin-related transmembrane protein 2 homolog from Drosophila melanogaster (Fruit fly).